Reading from the N-terminus, the 267-residue chain is Soluble interferon gamma receptor OPG193 (267 aa).

The first 17 residues, 1 to 17 (MRYIIILAVLFINSIHA), serve as a signal peptide directing secretion. Residues Asn42 and Asn150 are each glycosylated (N-linked (GlcNAc...) asparagine; by host).

The protein belongs to the type II cytokine receptor family. Homodimer. Interacts with host IFNG.

It localises to the secreted. Its function is as follows. Counteracts the antiviral effects of host IFN-gamma. Acts as a soluble IFN-gamma receptor and thus inhibits the interaction between host IFN-gamma and its receptor. This chain is Soluble interferon gamma receptor OPG193 (OPG193), found in Cynomys gunnisoni (Gunnison's prairie dog).